A 577-amino-acid chain; its full sequence is Laccase-17 (577 aa).

An N-terminal signal peptide occupies residues 1 to 22 (MALQLLLAVFSCVLLLPQPAFG). Plastocyanin-like domains are found at residues 30–146 (EIKM…PKRG) and 156–309 (KEVP…YEPP). Residues asparagine 35 and asparagine 76 are each glycosylated (N-linked (GlcNAc...) asparagine). Cu cation-binding residues include histidine 80 and histidine 82. N-linked (GlcNAc...) asparagine glycosylation is present at asparagine 112. The Cu cation site is built by histidine 125 and histidine 127. N-linked (GlcNAc...) asparagine glycosylation is found at asparagine 185, asparagine 201, asparagine 237, asparagine 297, asparagine 335, asparagine 383, asparagine 391, asparagine 401, asparagine 437, asparagine 444, asparagine 450, and asparagine 460. One can recognise a Plastocyanin-like 3 domain in the interval 427–561 (KFPWSPIVPF…RMAWLVLDGD (135 aa)). Cu cation contacts are provided by histidine 478, histidine 481, histidine 483, histidine 540, cysteine 541, histidine 542, and histidine 546.

This sequence belongs to the multicopper oxidase family. Cu cation serves as cofactor. Ubiquitous with higher levels in the inflorescence stem.

The protein resides in the secreted. It localises to the extracellular space. The protein localises to the apoplast. It carries out the reaction 4 hydroquinone + O2 = 4 benzosemiquinone + 2 H2O. In terms of biological role, lignin degradation and detoxification of lignin-derived products. The polypeptide is Laccase-17 (LAC17) (Arabidopsis thaliana (Mouse-ear cress)).